The chain runs to 344 residues: Gas vesicle ATPase GvpN2 (344 aa).

A disordered region spans residues 1–55 (MTDTSRNRKVRGSKIRSSRSDKRQSRGSEDKELKRLADARDTDSEQAGDRVGDAF). Residues 7-17 (NRKVRGSKIRS) are compositionally biased toward basic residues. A compositionally biased stretch (basic and acidic residues) spans 18–52 (SRSDKRQSRGSEDKELKRLADARDTDSEQAGDRVG). 89–96 (GPTGCGKT) is an ATP binding site.

This sequence belongs to the CbbQ/NirQ/NorQ/GpvN family. Forms homodimers, a GvpN-GvpO heterodimer, interacts with GvpC and GvpL, might interact with GvpA.

It is found in the gas vesicle. It localises to the cytoplasm. The catalysed reaction is ATP + H2O = ADP + phosphate + H(+). In terms of biological role, an ATPase that functions in gas vesicle formation. A minor component of the gas vesicle, also found in soluble extracts. Gas vesicles are hollow, gas filled proteinaceous nanostructures found in several microbial planktonic microorganisms. They allow positioning of halobacteria at the optimal depth for growth in the poorly aerated, shallow brine pools of their habitat. Expression of 2 c-vac DNA fragments containing 2 divergently transcribed regions (gvpE-gvpF-gvpG-gvpH-gvpI-gvpJ-gvpK-gvpL-gvpM and gvpA-gvpC-gvpN-gvpO) allows H.volcanii to produce gas vesicles. The protein is Gas vesicle ATPase GvpN2 of Halobacterium salinarum (strain ATCC 700922 / JCM 11081 / NRC-1) (Halobacterium halobium).